Reading from the N-terminus, the 146-residue chain is Pseudoazurin (146 aa).

A signal peptide spans 1-23; it reads MRNIAIKFAAAGILAMLAAPALA. The Plastocyanin-like domain maps to 28–116; sequence VHMLNKGAEG…MGMIALIAVG (89 aa). Residues H63, C101, H104, and M109 each coordinate Cu cation.

Cu cation is required as a cofactor.

It localises to the periplasm. Its function is as follows. This soluble electron transfer copper protein is required for the inactivation of copper-containing nitrite reductase in the presence of oxygen. Serves as a direct electron donor to the nitrite reductase. This Alcaligenes faecalis protein is Pseudoazurin.